Reading from the N-terminus, the 379-residue chain is Chaperone protein DnaJ (379 aa).

The region spanning 5-70 is the J domain; that stretch reads DYYETLGCDR…QKRAAYDRFG (66 aa). A CR-type zinc finger spans residues 134-212; it reads GKTAQIKIPT…CGGAGRVTRE (79 aa). 8 residues coordinate Zn(2+): C147, C150, C164, C167, C186, C189, C200, and C203. CXXCXGXG motif repeat units lie at residues 147-154, 164-171, 186-193, and 200-207; these read CETCSGTG, CRMCGGAG, CPNCQGRG, and CSDCGGAG.

This sequence belongs to the DnaJ family. As to quaternary structure, homodimer. Zn(2+) serves as cofactor.

It is found in the cytoplasm. Participates actively in the response to hyperosmotic and heat shock by preventing the aggregation of stress-denatured proteins and by disaggregating proteins, also in an autonomous, DnaK-independent fashion. Unfolded proteins bind initially to DnaJ; upon interaction with the DnaJ-bound protein, DnaK hydrolyzes its bound ATP, resulting in the formation of a stable complex. GrpE releases ADP from DnaK; ATP binding to DnaK triggers the release of the substrate protein, thus completing the reaction cycle. Several rounds of ATP-dependent interactions between DnaJ, DnaK and GrpE are required for fully efficient folding. Also involved, together with DnaK and GrpE, in the DNA replication of plasmids through activation of initiation proteins. The sequence is that of Chaperone protein DnaJ from Xanthobacter autotrophicus (strain ATCC BAA-1158 / Py2).